Reading from the N-terminus, the 453-residue chain is Gamma-aminobutyric acid receptor subunit alpha-6 (453 aa).

The signal sequence occupies residues 1–19 (MLLLLPWLFSLLWIENAQA). Topologically, residues 20–243 (QLEDEGNFYS…FHLQRKMGYF (224 aa)) are extracellular. N31 carries an N-linked (GlcNAc...) asparagine glycan. Position 84 (R84) interacts with 4-aminobutanoate. N128 and N141 each carry an N-linked (GlcNAc...) asparagine glycan. T147 is a 4-aminobutanoate binding site. C156 and C170 are joined by a disulfide. A helical transmembrane segment spans residues 244–264 (MIQIYTPCIMTVILSQVSFWI). Over 265-270 (NKESVP) the chain is Cytoplasmic. The chain crosses the membrane as a helical span at residues 271-290 (ARTVFGITTVLTMTTLSISA). Residues 291-304 (RHSLPKVSYATAMD) lie on the Extracellular side of the membrane. The helical transmembrane segment at 305–325 (WFIAVCFAFVFSALIEFAAVN) threads the bilayer. The Cytoplasmic segment spans residues 326–422 (YFTNLQSQKA…GTSKIDQYSR (97 aa)). At S375 the chain carries Phosphoserine. Position 403 is a phosphothreonine (T403). The helical transmembrane segment at 423–443 (ILFPVAFAGFNLVYWIVYLSK) threads the bilayer. The Extracellular segment spans residues 444-453 (DTMEVSSTVE).

It belongs to the ligand-gated ion channel (TC 1.A.9) family. Gamma-aminobutyric acid receptor (TC 1.A.9.5) subfamily. GABRA6 sub-subfamily. As to quaternary structure, heteropentamer, formed by a combination of alpha (GABRA1-6), beta (GABRB1-3), gamma (GABRG1-3), delta (GABRD), epsilon (GABRE), rho (GABRR1-3), pi (GABRP) and theta (GABRQ) chains, each subunit exhibiting distinct physiological and pharmacological properties. Binds UBQLN1. As to expression, expressed in brain, in cerebellar granule cells.

It is found in the postsynaptic cell membrane. The protein resides in the cell membrane. The catalysed reaction is chloride(in) = chloride(out). Alpha subunit of the heteropentameric ligand-gated chloride channel gated by gamma-aminobutyric acid (GABA), a major inhibitory neurotransmitter in the brain. GABA-gated chloride channels, also named GABA(A) receptors (GABAAR), consist of five subunits arranged around a central pore and contain GABA active binding site(s) located at the alpha and beta subunit interface(s). When activated by GABA, GABAARs selectively allow the flow of chloride anions across the cell membrane down their electrochemical gradient. Alpha-6/GABRA6 subunits are found at both synaptic and extrasynaptic sites. Chloride influx into the postsynaptic neuron following GABAAR opening decreases the neuron ability to generate a new action potential, thereby reducing nerve transmission. Extrasynaptic alpha-6-containing receptors contribute to the tonic GABAergic inhibition. Alpha-6 subunits are also present on glutamatergic synapses. This Rattus norvegicus (Rat) protein is Gamma-aminobutyric acid receptor subunit alpha-6.